Here is a 245-residue protein sequence, read N- to C-terminus: Tetraspanin-6 (245 aa).

Topologically, residues 1–19 are cytoplasmic; that stretch reads MASPSRRLQTKPVITCFKS. A helical membrane pass occupies residues 20–40; sequence VLLIYTFIFWITGVILLAVGI. At 41 to 59 the chain is on the extracellular side; it reads WGKVSLENYFSLLNEKATN. Residues 60-80 form a helical membrane-spanning segment; the sequence is VPFVLIATGTVIILLGTFGCF. Over 81–93 the chain is Cytoplasmic; the sequence is ATCRASAWMLKLY. Residues 94–114 form a helical membrane-spanning segment; it reads AMFLTLVFLVELVAAIVGFVF. Residues 115 to 208 lie on the Extracellular side of the membrane; that stretch reads RHEIKNSFKN…IKVMTIIESE (94 aa). N134 carries N-linked (GlcNAc...) asparagine glycosylation. A helical membrane pass occupies residues 209–229; it reads MGVVAGISFGVACFQLIGIFL. At 230–245 the chain is on the cytoplasmic side; that stretch reads AYCLSRAITNNQYEIV.

This sequence belongs to the tetraspanin (TM4SF) family.

The protein localises to the membrane. In Homo sapiens (Human), this protein is Tetraspanin-6 (TSPAN6).